Reading from the N-terminus, the 442-residue chain is Citrate synthase (442 aa).

Residues His274, His320, and Asp375 contribute to the active site.

The protein belongs to the citrate synthase family.

The catalysed reaction is oxaloacetate + acetyl-CoA + H2O = citrate + CoA + H(+). The protein operates within carbohydrate metabolism; tricarboxylic acid cycle; isocitrate from oxaloacetate: step 1/2. Functionally, catalyzes both citrate generation and citrate cleavage. Part of a reversible tricarboxylic acid (TCA) cycle that can fix carbon dioxide autotrophically and may represent an ancestral mode of the conventional reductive TCA (rTCA) cycle. The direction is controlled by the available carbon source(s). This chain is Citrate synthase, found in Thermosulfidibacter takaii (strain DSM 17441 / JCM 13301 / NBRC 103674 / ABI70S6).